The sequence spans 542 residues: CTP synthase (542 aa).

An amidoligase domain region spans residues 1–265 (MTAFIFITGG…GRMLTELLKV (265 aa)). Serine 13 contacts CTP. Residue serine 13 participates in UTP binding. 14–19 (SVGKGI) is a binding site for ATP. Tyrosine 54 provides a ligand contact to L-glutamine. Aspartate 71 is a binding site for ATP. Mg(2+) is bound by residues aspartate 71 and glutamate 140. CTP contacts are provided by residues 147–149 (DYE), 186–191 (KTKPLQ), and lysine 222. UTP-binding positions include 186–191 (KTKPLQ) and lysine 222. The 236-residue stretch at 297–532 (YVKLRDAYIS…LKAALARKMG (236 aa)) folds into the Glutamine amidotransferase type-1 domain. Glycine 352 contacts L-glutamine. The active-site Nucleophile; for glutamine hydrolysis is cysteine 379. L-glutamine is bound by residues 380-383 (YGMQ), glutamate 403, and arginine 460. Active-site residues include histidine 505 and glutamate 507.

This sequence belongs to the CTP synthase family. In terms of assembly, homotetramer.

The catalysed reaction is UTP + L-glutamine + ATP + H2O = CTP + L-glutamate + ADP + phosphate + 2 H(+). The enzyme catalyses L-glutamine + H2O = L-glutamate + NH4(+). It catalyses the reaction UTP + NH4(+) + ATP = CTP + ADP + phosphate + 2 H(+). The protein operates within pyrimidine metabolism; CTP biosynthesis via de novo pathway; CTP from UDP: step 2/2. Allosterically activated by GTP, when glutamine is the substrate; GTP has no effect on the reaction when ammonia is the substrate. The allosteric effector GTP functions by stabilizing the protein conformation that binds the tetrahedral intermediate(s) formed during glutamine hydrolysis. Inhibited by the product CTP, via allosteric rather than competitive inhibition. Its function is as follows. Catalyzes the ATP-dependent amination of UTP to CTP with either L-glutamine or ammonia as the source of nitrogen. Regulates intracellular CTP levels through interactions with the four ribonucleotide triphosphates. This is CTP synthase from Caldivirga maquilingensis (strain ATCC 700844 / DSM 13496 / JCM 10307 / IC-167).